The following is a 417-amino-acid chain: Multifunctional CCA protein (417 aa).

The ATP site is built by Gly8 and Arg11. 2 residues coordinate CTP: Gly8 and Arg11. Asp21 and Asp23 together coordinate Mg(2+). The ATP site is built by Arg91, Arg143, and Arg146. CTP is bound by residues Arg91, Arg143, and Arg146. An HD domain is found at 232 to 333 (TGVHVMMVVD…VRLFERSDAL (102 aa)).

Belongs to the tRNA nucleotidyltransferase/poly(A) polymerase family. Bacterial CCA-adding enzyme type 1 subfamily. Monomer. Can also form homodimers and oligomers. Mg(2+) serves as cofactor. Ni(2+) is required as a cofactor.

The catalysed reaction is a tRNA precursor + 2 CTP + ATP = a tRNA with a 3' CCA end + 3 diphosphate. It catalyses the reaction a tRNA with a 3' CCA end + 2 CTP + ATP = a tRNA with a 3' CCACCA end + 3 diphosphate. Catalyzes the addition and repair of the essential 3'-terminal CCA sequence in tRNAs without using a nucleic acid template. Adds these three nucleotides in the order of C, C, and A to the tRNA nucleotide-73, using CTP and ATP as substrates and producing inorganic pyrophosphate. tRNA 3'-terminal CCA addition is required both for tRNA processing and repair. Also involved in tRNA surveillance by mediating tandem CCA addition to generate a CCACCA at the 3' terminus of unstable tRNAs. While stable tRNAs receive only 3'-terminal CCA, unstable tRNAs are marked with CCACCA and rapidly degraded. This chain is Multifunctional CCA protein, found in Paraburkholderia phymatum (strain DSM 17167 / CIP 108236 / LMG 21445 / STM815) (Burkholderia phymatum).